A 467-amino-acid polypeptide reads, in one-letter code: Protein CitXG (467 aa).

The apo-citrate lyase phosphoribosyl-dephospho-CoA transferase stretch occupies residues 1-178; that stretch reads MDYFEGGERL…NKMLHNFEKS (178 aa). The segment at 179-467 is 2-(5''-triphosphoribosyl)-3'-dephosphocoenzyme-A synthase; sequence KMIVPQMTQS…IFLARLVGSL (289 aa).

It in the N-terminal section; belongs to the CitX family. In the C-terminal section; belongs to the CitG/MdcB family.

The enzyme catalyses apo-[citrate lyase ACP] + 2'-(5''-triphospho-alpha-D-ribosyl)-3'-dephospho-CoA = holo-[citrate lyase ACP] + diphosphate. The catalysed reaction is 3'-dephospho-CoA + ATP = 2'-(5''-triphospho-alpha-D-ribosyl)-3'-dephospho-CoA + adenine. Bifunctional enzyme that catalyzes formation of 2-(5''-triphosphoribosyl)-3'-dephosphocoenzyme-A, and then the transfer of this prosthetic group precursor to the apo-acyl carrier protein (gamma chain) of the citrate lyase to yield the holo-acyl carrier protein. In Leuconostoc mesenteroides subsp. cremoris, this protein is Protein CitXG (citXG).